Reading from the N-terminus, the 375-residue chain is Alcohol dehydrogenase 1 (375 aa).

Ser-2 is subject to N-acetylserine. Zn(2+) contacts are provided by Cys-47, His-68, Cys-98, Cys-101, Cys-104, Cys-112, and Cys-175. Residues 200–205 (GLGGVG), Asp-224, and Lys-229 contribute to the NAD(+) site. Position 234 is an N6-succinyllysine (Lys-234). Position 293-295 (293-295 (VGV)) interacts with NAD(+). Lys-340 carries the N6-succinyllysine modification. Arg-370 serves as a coordination point for NAD(+).

The protein belongs to the zinc-containing alcohol dehydrogenase family. Homodimer. Zn(2+) serves as cofactor.

The protein resides in the cytoplasm. It carries out the reaction a primary alcohol + NAD(+) = an aldehyde + NADH + H(+). It catalyses the reaction a secondary alcohol + NAD(+) = a ketone + NADH + H(+). The protein is Alcohol dehydrogenase 1 (ADH1) of Oryctolagus cuniculus (Rabbit).